Consider the following 56-residue polypeptide: Small ribosomal subunit protein uS14 (56 aa).

Residues cysteine 21, cysteine 24, cysteine 39, and cysteine 42 each coordinate Zn(2+).

It belongs to the universal ribosomal protein uS14 family. Zinc-binding uS14 subfamily. Part of the 30S ribosomal subunit. Zn(2+) serves as cofactor.

Binds 16S rRNA, required for the assembly of 30S particles. The chain is Small ribosomal subunit protein uS14 from Thermococcus kodakarensis (strain ATCC BAA-918 / JCM 12380 / KOD1) (Pyrococcus kodakaraensis (strain KOD1)).